Here is a 738-residue protein sequence, read N- to C-terminus: Alcohol dehydrogenase (quinone), dehydrogenase subunit (738 aa).

An N-terminal signal peptide occupies residues 1-35; the sequence is MISAVFGKRRSLSRTLTAGTICAALISGYATMASA. E97 serves as a coordination point for pyrroloquinoline quinone. C143 and C144 are oxidised to a cystine. Pyrroloquinoline quinone is bound at residue R149. A Ca(2+)-binding site is contributed by E217. Residue T278 participates in pyrroloquinoline quinone binding. Ca(2+)-binding residues include N298 and D343. D343 acts as the Proton acceptor in catalysis. Residues K370 and I584 each contribute to the pyrroloquinoline quinone site. The Cytochrome c domain occupies 634 to 738; that stretch reads FDSKRTDNGY…NADGIPEQLP (105 aa). Residues C650, C653, H654, and M693 each contribute to the heme c site.

This sequence belongs to the bacterial PQQ dehydrogenase family. The alcohol dehydrogenase multicomponent enzyme system is composed of a dehydrogenase subunit I (AdhA) and a cytochrome c subunit II (AdhB). Pyrroloquinoline quinone is required as a cofactor. It depends on Ca(2+) as a cofactor. Requires heme c as cofactor.

It is found in the cell membrane. The enzyme catalyses ethanol + a ubiquinone = a ubiquinol + acetaldehyde. In terms of biological role, dehydrogenase component of the alcohol dehydrogenase multicomponent enzyme system which is involved in the production of acetic acid and in the ethanol oxidase respiratory chain. Quinohemoprotein alcohol dehydrogenase (ADH) catalyzes the oxidation of ethanol to acetaldehyde by transferring electrons to the ubiquinone embedded in the membrane phospholipids. The electrons transfer from ethanol to membranous ubiquinone occurs from pyrroloquinoline quinone (PQQ) to one heme c in subunit I (AdhA), and finally to two heme c in subunit II (AdhB). Besides ubiquinone reduction, ADH also has a ubiquinol (QH2) oxidation reaction which mediates electron transfer from ubiquinol to the non-energy generating bypass oxidase system. The electrons transfer occurs from ubiquinol (QH2) to the additional heme c within subunit II (AdhB). In Gluconacetobacter polyoxogenes (Acetobacter polyoxogenes), this protein is Alcohol dehydrogenase (quinone), dehydrogenase subunit (adhA).